A 298-amino-acid polypeptide reads, in one-letter code: Octopine catabolism/uptake operon regulatory protein OccR (298 aa).

Residues 1–58 enclose the HTH lysR-type domain; it reads MNLRQVEAFRAVMLTGQMTAAAELMLVTQPAISRLIKDFEQATKLQLFERRGNHIIPT. The H-T-H motif DNA-binding region spans 18 to 37; the sequence is MTAAAELMLVTQPAISRLIK.

The protein belongs to the LysR transcriptional regulatory family.

Its function is as follows. Positive regulatory protein for the occ operon involved in octopine catabolism and uptake. Also acts as a negative regulator of its expression. The sequence is that of Octopine catabolism/uptake operon regulatory protein OccR (occR) from Agrobacterium tumefaciens (strain Ach5).